A 706-amino-acid polypeptide reads, in one-letter code: UvrABC system protein C (706 aa).

Positions 16–95 (VEPGVYRFRD…IKEFDPRFNV (80 aa)) constitute a GIY-YIG domain. Residues 208 to 243 (DRLAKDMEQQMTAAAEQLDFERAARLRDDISALKRA) enclose the UVR domain. The interval 651 to 706 (APQNGTAPDPAPGTGDPQTPADPHSAATAADIEDDRHATGATGPQMNGSEQQVDRV) is disordered. Positions 692–706 (TGPQMNGSEQQVDRV) are enriched in polar residues.

It belongs to the UvrC family. In terms of assembly, interacts with UvrB in an incision complex.

Its subcellular location is the cytoplasm. Functionally, the UvrABC repair system catalyzes the recognition and processing of DNA lesions. UvrC both incises the 5' and 3' sides of the lesion. The N-terminal half is responsible for the 3' incision and the C-terminal half is responsible for the 5' incision. This Mycolicibacterium smegmatis (strain ATCC 700084 / mc(2)155) (Mycobacterium smegmatis) protein is UvrABC system protein C.